A 190-amino-acid chain; its full sequence is Endoribonuclease YbeY (190 aa).

The tract at residues 1–25 (MSQPRPGHRPDCNGADPDSNFASMT) is disordered. Residues histidine 147, histidine 151, and histidine 157 each contribute to the Zn(2+) site.

The protein belongs to the endoribonuclease YbeY family. The cofactor is Zn(2+).

It is found in the cytoplasm. Its function is as follows. Single strand-specific metallo-endoribonuclease involved in late-stage 70S ribosome quality control and in maturation of the 3' terminus of the 16S rRNA. The protein is Endoribonuclease YbeY of Rhodopseudomonas palustris (strain ATCC BAA-98 / CGA009).